We begin with the raw amino-acid sequence, 2281 residues long: Retinal-specific phospholipid-transporting ATPase ABCA4 (2281 aa).

Topologically, residues Met1–Arg24 are cytoplasmic. The helical transmembrane segment at Phe25–Val45 threads the bilayer. The Extracellular segment spans residues Asn46–Ser646. 2 cysteine pairs are disulfide-bonded: Cys54–Cys81 and Cys75–Cys324. The N-linked (GlcNAc...) asparagine glycan is linked to Asn98. Mg(2+) contacts are provided by Ser336 and Asn338. A disulfide bridge links Cys370 with Cys519. N-linked (Hex...) asparagine glycans are attached at residues Asn415 and Asn504. An N-all-trans-retinylidenephosphatidylethanolamine is bound by residues Arg587 and Arg653. Cystine bridges form between Cys641/Cys1488, Cys1442/Cys1453, and Cys1486/Cys1500. Residues Phe647–Val667 traverse the membrane as a helical segment. Residues Ser668 to Thr699 lie on the Cytoplasmic side of the membrane. A helical transmembrane segment spans residues Trp700–Met720. The Extracellular portion of the chain corresponds to His721 to Pro730. The helical transmembrane segment at Phe731 to Leu751 threads the bilayer. The Cytoplasmic segment spans residues Ser752–Ser759. Residues Leu760–Phe780 traverse the membrane as a helical segment. Over Ala781–Ser835 the chain is Extracellular. Residues Phe836–Tyr856 traverse the membrane as a helical segment. Residues Leu857–Gln1374 are Cytoplasmic-facing. Residue Thr901 is modified to Phosphothreonine. One can recognise an ABC transporter 1 domain in the interval Val929–Val1160. ATP contacts are provided by Phe938, Gly966, and Lys969. Thr970 is a Mg(2+) binding site. ATP is bound by residues Thr971, Gln1010, Lys1054, Gly1064, Gly1065, and His1118. Ser1185 is subject to Phosphoserine. The interval Glu1295–Ser1340 is disordered. Positions Ala1310 to Ser1319 are enriched in polar residues. Position 1313 is a phosphothreonine (Thr1313). Phosphoserine is present on residues Ser1317 and Ser1319. A helical transmembrane segment spans residues Ile1375–Phe1395. Topologically, residues Gly1396–Val1679 are extracellular. N-linked (Hex...) asparagine glycosylation occurs at Asn1455. The N-linked (Hex...) asparagine glycan is linked to Asn1527. Asn1586 carries an N-linked (GlcNAc...) asparagine glycan. Asn1660 carries N-linked (Hex...) asparagine glycosylation. The helical transmembrane segment at Val1680 to Ile1700 threads the bilayer. The Cytoplasmic portion of the chain corresponds to Gln1701–Asn1725. The helical transmembrane segment at Phe1726 to Gly1746 threads the bilayer. The Extracellular portion of the chain corresponds to Phe1747–Asn1757. The chain crosses the membrane as a helical span at residues Leu1758–Pro1778. Residues Ala1779–Tyr1790 are Cytoplasmic-facing. The chain crosses the membrane as a helical span at residues Val1791–Leu1811. The Extracellular segment spans residues Glu1812 to Lys1829. Residue Asn1817 is glycosylated (N-linked (GlcNAc...) asparagine). A helical transmembrane segment spans residues Leu1830–Gln1850. At Ala1851–Ala1879 the chain is on the cytoplasmic side. A helical transmembrane segment spans residues Met1880–Phe1900. Topologically, residues Ser1901–Gly2281 are extracellular. Asn1931 carries an N-linked (GlcNAc...) asparagine glycan. An ABC transporter 2 domain is found at Leu1936–Lys2168. ATP is bound by residues Asn1972, Gly1973, Lys1976, Thr1977, and Thr1978. Thr1977 contributes to the Mg(2+) binding site. Residues Asn2004 and Asn2050 are each glycosylated (N-linked (GlcNAc...) asparagine). Position 2071 (Gly2071) interacts with ATP. The essential for ATP binding and ATPase activity stretch occupies residues Val2242–Ala2247. N-linked (GlcNAc...) asparagine glycosylation occurs at Asn2251. The disordered stretch occupies residues Ala2262–Gly2281.

Post-translationally, N-glycosylated. Proteolytic cleavage by trypsin leads to a 120-kDa N-terminal fragment and a 115-kDa C-terminal fragment that are linked through disulfide bonds. In terms of processing, phosphorylation is independent of light exposure and modulates ATPase activity. As to expression, expressed in retina namely in the periphery and incisures of the rod outer segments (ROS).

It localises to the membrane. The protein resides in the cell projection. Its subcellular location is the cilium. It is found in the photoreceptor outer segment. The protein localises to the cytoplasmic vesicle. It localises to the endoplasmic reticulum. It carries out the reaction ATP + H2O + phospholipidSide 1 = ADP + phosphate + phospholipidSide 2.. It catalyses the reaction an N-all-trans-retinylidenephosphatidylethanolamine(out) + ATP + H2O = an N-all-trans-retinylidenephosphatidylethanolamine(in) + ADP + phosphate + H(+). The enzyme catalyses a 1,2-diacyl-sn-glycero-3-phosphoethanolamine(out) + ATP + H2O = a 1,2-diacyl-sn-glycero-3-phosphoethanolamine(in) + ADP + phosphate + H(+). The catalysed reaction is N-11-cis-retinylidenephosphatidylethanolamine(out) + ATP + H2O = N-11-cis-retinylidenephosphatidylethanolamine(in) + ADP + phosphate + H(+). It carries out the reaction ATP + H2O = ADP + phosphate + H(+). With respect to regulation, all-trans-retinal transport activity is reduced by EDTA chelation of Mg2+. All-trans-retinal transport activity is inhibited by N-ethylmaleimide (NEM). Phosphatidylethanolamine transport is strongly inhibited by beryllium fluoride and NEM. Its function is as follows. Flippase that catalyzes in an ATP-dependent manner the transport of retinal-phosphatidylethanolamine conjugates like the 11-cis and all-trans isomers of N-retinylidene-phosphatidylethanolamine from the lumen to the cytoplasmic leaflet of photoreceptor outer segment disk membranes, where N-cis-retinylidene-phosphatidylethanolamine (N-cis-R-PE) is then isomerized to its all-trans isomer (N-trans-R-PE) and reduced by RDH8 to produce all-trans-retinol (all-trans-rol) and therefore prevents the accumulation of excess of 11-cis-retinal and its schiff-base conjugate and the formation of toxic bisretinoid. Displays both ATPase and GTPase activity that is strongly influenced by the lipid environment and the presence of retinoid compounds. Binds the unprotonated form of N-retinylidene-phosphatidylethanolamine with high affinity in the absence of ATP and ATP binding and hydrolysis induce a protein conformational change that causes the dissociation of N-retinylidene-phosphatidylethanolamine. This is Retinal-specific phospholipid-transporting ATPase ABCA4 from Bos taurus (Bovine).